Reading from the N-terminus, the 472-residue chain is Glutamine synthetase (472 aa).

The 85-residue stretch at 17–101 (NNVKFVLLRF…IRCSVYEPTT (85 aa)) folds into the GS beta-grasp domain. Residues 109–472 (PRSIAIRAEN…HPVEFEMYYA (364 aa)) enclose the GS catalytic domain. Mg(2+)-binding residues include E134 and E136. E212 lines the ATP pocket. The Mg(2+) site is built by E217 and E225. Residues 269–270 (NG) and G270 each bind L-glutamate. A Mg(2+)-binding site is contributed by H274. ATP contacts are provided by residues 276-278 (NMS) and S278. L-glutamate contacts are provided by R326, E332, and R344. ATP contacts are provided by R344, R349, and K357. A Mg(2+)-binding site is contributed by E362. R364 contacts L-glutamate. Residue Y402 is modified to O-AMP-tyrosine.

Belongs to the glutamine synthetase family. Oligomer of 12 subunits arranged in the form of two hexameric ring. Mg(2+) is required as a cofactor.

Its subcellular location is the cytoplasm. It carries out the reaction L-glutamate + NH4(+) + ATP = L-glutamine + ADP + phosphate + H(+). The activity of this enzyme could be controlled by adenylation under conditions of abundant glutamine. In terms of biological role, catalyzes the ATP-dependent biosynthesis of glutamine from glutamate and ammonia. In Haemophilus influenzae (strain ATCC 51907 / DSM 11121 / KW20 / Rd), this protein is Glutamine synthetase.